A 357-amino-acid chain; its full sequence is Zinc finger protein 830 (357 aa).

The segment at Cys-47 to His-69 adopts a C2H2-type zinc-finger fold. 3 disordered regions span residues Arg-98–Pro-126, Asp-157–Leu-194, and Ala-231–Gln-255. Residues Lys-99 to Glu-115 are compositionally biased toward basic and acidic residues. Over residues Asp-157–Asn-168 the composition is skewed to acidic residues. A compositionally biased stretch (basic and acidic residues) spans Ala-242–Gln-255. The stretch at Ala-279–Lys-325 forms a coiled coil.

It localises to the nucleus. Its subcellular location is the chromosome. It is found in the nucleus speckle. In terms of biological role, may act as an important regulator of the cell cycle that participates in the maintenance of genome integrity. In Xenopus tropicalis (Western clawed frog), this protein is Zinc finger protein 830.